The primary structure comprises 354 residues: UDP-N-acetylglucosamine--N-acetylmuramyl-(pentapeptide) pyrophosphoryl-undecaprenol N-acetylglucosamine transferase (354 aa).

UDP-N-acetyl-alpha-D-glucosamine-binding positions include 11-13, Arg-164, Ser-194, and Gln-289; that span reads TAG.

The protein belongs to the glycosyltransferase 28 family. MurG subfamily.

It is found in the cell membrane. It carries out the reaction di-trans,octa-cis-undecaprenyl diphospho-N-acetyl-alpha-D-muramoyl-L-alanyl-D-glutamyl-meso-2,6-diaminopimeloyl-D-alanyl-D-alanine + UDP-N-acetyl-alpha-D-glucosamine = di-trans,octa-cis-undecaprenyl diphospho-[N-acetyl-alpha-D-glucosaminyl-(1-&gt;4)]-N-acetyl-alpha-D-muramoyl-L-alanyl-D-glutamyl-meso-2,6-diaminopimeloyl-D-alanyl-D-alanine + UDP + H(+). Its pathway is cell wall biogenesis; peptidoglycan biosynthesis. Its function is as follows. Cell wall formation. Catalyzes the transfer of a GlcNAc subunit on undecaprenyl-pyrophosphoryl-MurNAc-pentapeptide (lipid intermediate I) to form undecaprenyl-pyrophosphoryl-MurNAc-(pentapeptide)GlcNAc (lipid intermediate II). The sequence is that of UDP-N-acetylglucosamine--N-acetylmuramyl-(pentapeptide) pyrophosphoryl-undecaprenol N-acetylglucosamine transferase from Clostridium botulinum (strain 657 / Type Ba4).